Here is a 1188-residue protein sequence, read N- to C-terminus: DNA-directed RNA polymerase subunit beta (1188 aa).

The protein belongs to the RNA polymerase beta chain family. In terms of assembly, the RNAP catalytic core consists of 2 alpha, 1 beta, 1 beta' and 1 omega subunit. When a sigma factor is associated with the core the holoenzyme is formed, which can initiate transcription.

It catalyses the reaction RNA(n) + a ribonucleoside 5'-triphosphate = RNA(n+1) + diphosphate. Its function is as follows. DNA-dependent RNA polymerase catalyzes the transcription of DNA into RNA using the four ribonucleoside triphosphates as substrates. This chain is DNA-directed RNA polymerase subunit beta, found in Streptococcus pyogenes serotype M18 (strain MGAS8232).